The primary structure comprises 281 residues: CCAAT/enhancer-binding protein epsilon (281 aa).

Positions M1 to L30 are disordered. Residue K121 forms a Glycyl lysine isopeptide (Lys-Gly) (interchain with G-Cter in SUMO2) linkage. S181 bears the Phosphoserine mark. A bZIP domain is found at S204–I267. The tract at residues R208–R245 is basic motif. The tract at residues L246–I267 is leucine-zipper.

It belongs to the bZIP family. C/EBP subfamily. As to quaternary structure, binds DNA as a homodimer and as a heterodimer. Can form stable heterodimers with CEBPA, CEBPB and CEBPD. Interacts with GATA1 and SPI1. Interacts with SMARCD2.

It is found in the nucleus. Transcriptional activator. C/EBP are DNA-binding proteins that recognize two different motifs: the CCAAT homology common to many promoters and the enhanced core homology common to many enhancers. Required for the promyelocyte-myelocyte transition in myeloid differentiation. This Rattus norvegicus (Rat) protein is CCAAT/enhancer-binding protein epsilon (Cebpe).